Reading from the N-terminus, the 164-residue chain is Phosphopantetheine adenylyltransferase (164 aa).

Ser-9 provides a ligand contact to substrate. ATP-binding positions include 9-10 and His-17; that span reads SF. Positions 41, 73, and 87 each coordinate substrate. ATP-binding positions include 88–90, Glu-98, and 122–128; these read GLR and YSYLSSS.

The protein belongs to the bacterial CoaD family. As to quaternary structure, homohexamer. It depends on Mg(2+) as a cofactor.

Its subcellular location is the cytoplasm. It carries out the reaction (R)-4'-phosphopantetheine + ATP + H(+) = 3'-dephospho-CoA + diphosphate. Its pathway is cofactor biosynthesis; coenzyme A biosynthesis; CoA from (R)-pantothenate: step 4/5. In terms of biological role, reversibly transfers an adenylyl group from ATP to 4'-phosphopantetheine, yielding dephospho-CoA (dPCoA) and pyrophosphate. This chain is Phosphopantetheine adenylyltransferase, found in Rhodococcus jostii (strain RHA1).